A 275-amino-acid chain; its full sequence is Arylalkylamine N-acetyltransferase 1 (275 aa).

Acetyl-CoA contacts are provided by residues 181-183 (LSV) and 189-193 (GLGIA). Positions 181 to 254 (LSVDTNYRGL…GEVVFKPAAP (74 aa)) constitute an N-acetyltransferase domain.

It belongs to the acetyltransferase family. AANAT subfamily. In terms of tissue distribution, in the adult, expressed in the midgut portion of the thoracic segments and the frontal half of the abdomen (at protein level). Expressed in the epithelial cell layer facing the lumen of the gut (at protein level). In the brain, expressed in a sub-populations of neurons and astrocytes, and in a set of distinct stripes in the optic lobes (at protein level). Expressed mainly in serotonergic neurons but also in subsets of glutamatergic, GABAergic and cholinergic neurons (at protein level).

Its subcellular location is the cytoplasm. The protein localises to the nucleus. It carries out the reaction a 2-arylethylamine + acetyl-CoA = an N-acetyl-2-arylethylamine + CoA + H(+). The catalysed reaction is serotonin + acetyl-CoA = N-acetylserotonin + CoA + H(+). It catalyses the reaction dopamine + acetyl-CoA = N-acetyldopamine + CoA + H(+). The enzyme catalyses tyramine + acetyl-CoA = N-acetyltyramine + CoA + H(+). It carries out the reaction octopamine + acetyl-CoA = N-acetyloctopamine + CoA + H(+). The catalysed reaction is 5-methoxytryptamine + acetyl-CoA = melatonin + CoA + H(+). It catalyses the reaction 2-phenylethylamine + acetyl-CoA = N-(2-phenylethyl)acetamide + CoA + H(+). The enzyme catalyses noradrenaline + acetyl-CoA = N-acetylnoradrenaline + CoA + H(+). It carries out the reaction tyramine + butanoyl-CoA = N-butanoyltyramine + CoA + H(+). The catalysed reaction is tyramine + hexanoyl-CoA = N-hexanoyltyramine + CoA + H(+). It catalyses the reaction tryptamine + acetyl-CoA = N-acetyltryptamine + CoA + H(+). The enzyme catalyses dopamine + hexadecanoyl-CoA = N-hexadecanoyl-dopamine + CoA + H(+). It carries out the reaction dopamine + (9Z)-octadecenoyl-CoA = N-(9Z-octadecanoyl)-dopamine + CoA + H(+). The catalysed reaction is serotonin + hexadecanoyl-CoA = N-hexadecanoyl-serotonin + CoA + H(+). It catalyses the reaction serotonin + (9Z)-octadecenoyl-CoA = N-(9Z-octadecenoyl)-serotonin + CoA + H(+). The enzyme catalyses serotonin + octadecanoyl-CoA = N-octadecanoyl-serotonin + CoA + H(+). It carries out the reaction serotonin + (5Z,8Z,11Z,14Z)-eicosatetraenoyl-CoA = N-[(5Z,8Z,11Z,14Z)-eicosatetraenoyl]-serotonin + CoA + H(+). The protein operates within aromatic compound metabolism; melatonin biosynthesis; melatonin from serotonin: step 1/2. With respect to regulation, inhibited by long-chain acyl-CoA thioesters, oleoyl-CoA (an analog of acetyl-CoA) and tyrosol (an analog of tyramine). In terms of biological role, catalyzes N-acetylation of tryptamine, tyramine, dopamine, serotonin and octopamine. In astrocytes, regulates sleep homeostasis by limiting the accumulation of serotonin and dopamine in the brain upon sleep deprivation. Is not essential for sclerotization. This is Arylalkylamine N-acetyltransferase 1 from Drosophila melanogaster (Fruit fly).